The primary structure comprises 594 residues: ATP-dependent RNA helicase DDX55 (594 aa).

Positions 9 to 37 (WDSLPQKLNGSIRRTLEELKFTHMTPVQS) match the Q motif motif. One can recognise a Helicase ATP-binding domain in the interval 40–223 (IPLFMNNKDI…RAGLRNPVRI (184 aa)). Position 53–60 (53–60 (AITGSGKT)) interacts with ATP. The DEAD box motif lies at 171–174 (DEAD). Residues 254–411 (KFNKLIAFLQ…DLLPKLKAMA (158 aa)) form the Helicase C-terminal domain. Residues 486–542 (YKDKNREKQRQKMLKERKEKLETEGRKHFAKNKAWSKQKARKEKKQKVALKRKKEEG) are a coiled coil. Basic and acidic residues predominate over residues 502 to 512 (RKEKLETEGRK). Residues 502 to 548 (RKEKLETEGRKHFAKNKAWSKQKARKEKKQKVALKRKKEEGSDIDEG) form a disordered region. Positions 513 to 537 (HFAKNKAWSKQKARKEKKQKVALKR) are enriched in basic residues. The important for nuclear localization stretch occupies residues 532 to 561 (KVALKRKKEEGSDIDEGDVDELLQDTRLLK).

Belongs to the DEAD box helicase family. DDX55/SPB4 subfamily. Interacts with 28S rRNA. Interacts with double-stranded RNA substrates in vitro; the interaction stimulates ATPase activity.

The protein localises to the nucleus. The protein resides in the nucleoplasm. The catalysed reaction is ATP + H2O = ADP + phosphate + H(+). Its function is as follows. Probable ATP-binding RNA helicase. Has ATPase activity and is involved in the maturation of precursor large subunit rRNAs. This Xenopus laevis (African clawed frog) protein is ATP-dependent RNA helicase DDX55 (ddx55).